Here is a 94-residue protein sequence, read N- to C-terminus: uncharacterized protein (94 aa).

This is an uncharacterized protein from Homo sapiens (Human).